A 252-amino-acid polypeptide reads, in one-letter code: Imidazole glycerol phosphate synthase subunit HisF (252 aa).

Residues Asp11 and Asp130 contribute to the active site.

It belongs to the HisA/HisF family. As to quaternary structure, heterodimer of HisH and HisF.

The protein localises to the cytoplasm. The catalysed reaction is 5-[(5-phospho-1-deoxy-D-ribulos-1-ylimino)methylamino]-1-(5-phospho-beta-D-ribosyl)imidazole-4-carboxamide + L-glutamine = D-erythro-1-(imidazol-4-yl)glycerol 3-phosphate + 5-amino-1-(5-phospho-beta-D-ribosyl)imidazole-4-carboxamide + L-glutamate + H(+). Its pathway is amino-acid biosynthesis; L-histidine biosynthesis; L-histidine from 5-phospho-alpha-D-ribose 1-diphosphate: step 5/9. IGPS catalyzes the conversion of PRFAR and glutamine to IGP, AICAR and glutamate. The HisF subunit catalyzes the cyclization activity that produces IGP and AICAR from PRFAR using the ammonia provided by the HisH subunit. This Azobacteroides pseudotrichonymphae genomovar. CFP2 protein is Imidazole glycerol phosphate synthase subunit HisF.